We begin with the raw amino-acid sequence, 562 residues long: MSPWRCIAEQLVEYEEPVDAKAYFDKIICLWKEYPNAISNRINTSVPVEEESQVWNEVIANFESKYRFDPANSSELSIFKLIQRDYKRQSFSNNCYEVAFYEEELLVRFYPIVLDGQQHPHFESPYSIACKIPSNSSILLQFFKPVDTPDDHFEFLKTLAFKQLVTWLKSIDLSKTTRKTHSLLDKESYISTYRHIREDLGRPLVEGWTENSKPQKVIFEDCGIASYIQELITSGILPKPRKFVDIGCGNGLLVHLLNKIGIPGYGVDVRSRKVWKTTLSHVDLRESPVDPQIVVENRPHFDADVDLLIGNHSDELTPWIPVMAAKLNCNFFLIPCCPYNFFGKYLNNGSHLGPKRMTSQYESFFEWTVSVSERLGFDTKMDRLAIPSTKRLCIIGRVPEKGLCPSLEQTIEHMTQGQKFVARPREIRNNNCMHISVTDRERIAKKLFDFILNASDDVRDGWRCGGEVPLAQLAGQLTDDDKKLMKDQDGGLQTFLRNHHQIFHVFQATARLRDFRQPVVSRRQQTNPKKQEATNRPKQPCWMSLNHPDGCPLGPESCRYLH.

Residues 520–546 (VSRRQQTNPKKQEATNRPKQPCWMSLN) form a disordered region. Residues 535 to 562 (NRPKQPCWMSLNHPDGCPLGPESCRYLH) form a C3H1-type zinc finger.

Belongs to the TRM44 family.

The protein resides in the cytoplasm. It carries out the reaction uridine(44) in tRNA(Ser) + S-adenosyl-L-methionine = 2'-O-methyluridine(44) in tRNA(Ser) + S-adenosyl-L-homocysteine + H(+). In terms of biological role, probable adenosyl-L-methionine (AdoMet)-dependent tRNA (uracil-O(2)-)-methyltransferase. The protein is Probable tRNA (uracil-O(2)-)-methyltransferase of Caenorhabditis briggsae.